An 85-amino-acid polypeptide reads, in one-letter code: Small ribosomal subunit protein uS17 (85 aa).

This sequence belongs to the universal ribosomal protein uS17 family. In terms of assembly, part of the 30S ribosomal subunit.

Its function is as follows. One of the primary rRNA binding proteins, it binds specifically to the 5'-end of 16S ribosomal RNA. The polypeptide is Small ribosomal subunit protein uS17 (Geobacter sulfurreducens (strain ATCC 51573 / DSM 12127 / PCA)).